We begin with the raw amino-acid sequence, 545 residues long: CTP synthase (545 aa).

An amidoligase domain region spans residues 1 to 266 (MKTNYIFVTG…DDYICKRFSL (266 aa)). Ser-14 is a binding site for CTP. A UTP-binding site is contributed by Ser-14. ATP contacts are provided by residues 15–20 (SLGKGI) and Asp-72. Asp-72 and Glu-140 together coordinate Mg(2+). Residues 147–149 (DIE), 187–192 (KTKPTQ), and Lys-223 each bind CTP. Residues 187–192 (KTKPTQ) and Lys-223 contribute to the UTP site. 239-241 (KDV) is an ATP binding site. Residues 291–542 (TIGMVGKYVE…VKAAGKYQKG (252 aa)) enclose the Glutamine amidotransferase type-1 domain. Residue Gly-352 participates in L-glutamine binding. Cys-379 acts as the Nucleophile; for glutamine hydrolysis in catalysis. L-glutamine contacts are provided by residues 380-383 (LGMQ), Glu-403, and Arg-470. Active-site residues include His-515 and Glu-517.

Belongs to the CTP synthase family. As to quaternary structure, homotetramer.

The enzyme catalyses UTP + L-glutamine + ATP + H2O = CTP + L-glutamate + ADP + phosphate + 2 H(+). The catalysed reaction is L-glutamine + H2O = L-glutamate + NH4(+). It catalyses the reaction UTP + NH4(+) + ATP = CTP + ADP + phosphate + 2 H(+). Its pathway is pyrimidine metabolism; CTP biosynthesis via de novo pathway; CTP from UDP: step 2/2. Its activity is regulated as follows. Allosterically activated by GTP, when glutamine is the substrate; GTP has no effect on the reaction when ammonia is the substrate. The allosteric effector GTP functions by stabilizing the protein conformation that binds the tetrahedral intermediate(s) formed during glutamine hydrolysis. Inhibited by the product CTP, via allosteric rather than competitive inhibition. Functionally, catalyzes the ATP-dependent amination of UTP to CTP with either L-glutamine or ammonia as the source of nitrogen. Regulates intracellular CTP levels through interactions with the four ribonucleotide triphosphates. In Photorhabdus laumondii subsp. laumondii (strain DSM 15139 / CIP 105565 / TT01) (Photorhabdus luminescens subsp. laumondii), this protein is CTP synthase.